A 130-amino-acid chain; its full sequence is Small ribosomal subunit protein uS9 (130 aa).

The protein belongs to the universal ribosomal protein uS9 family.

This Thioalkalivibrio sulfidiphilus (strain HL-EbGR7) protein is Small ribosomal subunit protein uS9.